The sequence spans 210 residues: Dof zinc finger protein DOF4.4 (210 aa).

The segment at 24-78 (RVCPRCDSDNTKFCFYNNYSESQPRYFCKNCRRYWTHGGALRNIPVGGSCRKPKR) adopts a Dof-type zinc-finger fold. Zn(2+)-binding residues include Cys26, Cys29, Cys51, and Cys54.

It localises to the nucleus. In terms of biological role, transcription factor that binds specifically to a 5'-AA[AG]G-3' consensus core sequence. This is Dof zinc finger protein DOF4.4 (DOF4.4) from Arabidopsis thaliana (Mouse-ear cress).